A 233-amino-acid polypeptide reads, in one-letter code: Lysine exporter LysE (233 aa).

The Cytoplasmic portion of the chain corresponds to 1-2 (ME). The chain crosses the membrane as a helical span at residues 3 to 23 (IFITGLLLGASLLLSIGPQNV). At 24-65 (LVIKQGIKREGLIAVLLVCLISDVFLFIAGTLGVDLLSNAAP) the chain is on the periplasmic side. A helical membrane pass occupies residues 66–86 (IVLDIMRWGGIAYLLWFAVMA). At 87 to 143 (AKDAMTNKVEAPQIIEETEPTVPDDTPLGGSAVATDTRNRVRVEVSVDKQRVWVKPM) the chain is on the cytoplasmic side. A helical transmembrane segment spans residues 144 to 164 (LMAIVLTWLNPNAYLDAFVFI). Residues 165–176 (GGVGAQYGDTGR) are Periplasmic-facing. A helical membrane pass occupies residues 177-197 (WIFAAGAFAASLIWFPLVGFG). Residues 198–212 (AAALSRPLSSPKVWR) are Cytoplasmic-facing. A helical membrane pass occupies residues 213–233 (WINVVVAVVMTALAIKLMLMG).

It belongs to the LysE/ArgO transporter (TC 2.A.75) family.

Its subcellular location is the cell inner membrane. Its activity is regulated as follows. Transport process is modulated by three forces: the membrane potential, the chemical potential of lysine, and the proton gradient. Strongly inhibited by CCCP and valinomycin. In terms of biological role, catalyzes the efflux of L-lysine. Can also export L-arginine and L-citrulline. The lysEG system prevents bacteriostasis due to elevated L-lysine or L-arginine concentrations that arise during growth in the presence of peptides or in mutants possessing a deregulated biosynthesis pathway. In vitro, can also export D-lysine during biotechnological production of D-amino acids. This chain is Lysine exporter LysE, found in Corynebacterium glutamicum (strain ATCC 13032 / DSM 20300 / JCM 1318 / BCRC 11384 / CCUG 27702 / LMG 3730 / NBRC 12168 / NCIMB 10025 / NRRL B-2784 / 534).